Here is a 190-residue protein sequence, read N- to C-terminus: Segregation and condensation protein B (190 aa).

It belongs to the ScpB family. As to quaternary structure, homodimer. Homodimerization may be required to stabilize the binding of ScpA to the Smc head domains. Component of a cohesin-like complex composed of ScpA, ScpB and the Smc homodimer, in which ScpA and ScpB bind to the head domain of Smc. The presence of the three proteins is required for the association of the complex with DNA.

It localises to the cytoplasm. In terms of biological role, participates in chromosomal partition during cell division. May act via the formation of a condensin-like complex containing Smc and ScpA that pull DNA away from mid-cell into both cell halves. The chain is Segregation and condensation protein B from Bacillus cereus (strain B4264).